Reading from the N-terminus, the 235-residue chain is UPF0173 metal-dependent hydrolase mll0680 (235 aa).

The protein belongs to the UPF0173 family.

This is UPF0173 metal-dependent hydrolase mll0680 from Mesorhizobium japonicum (strain LMG 29417 / CECT 9101 / MAFF 303099) (Mesorhizobium loti (strain MAFF 303099)).